We begin with the raw amino-acid sequence, 143 residues long: Large ribosomal subunit protein uL13 (143 aa).

Belongs to the universal ribosomal protein uL13 family. Part of the 50S ribosomal subunit.

In terms of biological role, this protein is one of the early assembly proteins of the 50S ribosomal subunit, although it is not seen to bind rRNA by itself. It is important during the early stages of 50S assembly. This Carboxydothermus hydrogenoformans (strain ATCC BAA-161 / DSM 6008 / Z-2901) protein is Large ribosomal subunit protein uL13.